Here is a 488-residue protein sequence, read N- to C-terminus: MPGGRRGPSRQQLSRSALPSLQTLVGGGCGNGTGLRNRNGSAIGLPVPPITALITPGPVRHCQIPDLPVDGSLLFEFLFFIYLLVALFIQYINIYKTVWWYPYNHPASCTSLNFHLIDYHLAAFITVMLARRLVWALISEATKAGASSMIHYMVLISARLVLLTLCGWVLCWTLVNLFRSHSVLNLLFLGYPFGVYVPLCCFHQDSRAHLLLTDFPYAVQHQAVEESASTVGGLARSKDFLSLLLESLKEQFNNATPIPTHSCPLSPDLIRNEVECLKADFNHRIKEVLFNSLFSAYYVAFLPLCFVKSTQYYDMRWSCEHLIMVWINAFVMLTTQLLPSKYCDLLHKSAAHLGKWQKLEHGSYSNAPQHIWSENTIWPQGVLVRHSRCLYRAVGPYNVAVPSDVSHARFYFLFHRPLRLLNLLILIEGSVVFYQLYSLLRSEKWNHTLSMALILFCNYYVLFKLLRDRIVLGRAYSYPLNSYELKAN.

Asn31 and Asn39 each carry an N-linked (GlcNAc...) asparagine glycan. 8 consecutive transmembrane segments (helical) span residues 72–92, 110–130, 154–174, 182–202, 287–307, 319–339, 420–440, and 446–466; these read SLLFEFLFFIYLLVALFIQYI, TSLNFHLIDYHLAAFITVMLA, VLISARLVLLTLCGWVLCWTL, SVLNLLFLGYPFGVYVPLCCF, EVLFNSLFSAYYVAFLPLCFV, CEHLIMVWINAFVMLTTQLLP, LLNLLILIEGSVVFYQLYSLL, and NHTLSMALILFCNYYVLFKLL.

This sequence belongs to the TMEM39 family. Interacts with SACM1L, SEC23A and SEC24A.

The protein resides in the endoplasmic reticulum membrane. Functionally, regulates autophagy by controlling the spatial distribution and levels of the intracellular phosphatidylinositol 4-phosphate (PtdIns(4)P) pools. Modulates (PtdIns(4)P) levels by regulating the ER-to-Golgi trafficking of the phosphatidylinositide phosphatase SACM1L. The protein is Transmembrane protein 39A (TMEM39A) of Bos taurus (Bovine).